The sequence spans 489 residues: Pluviatolide synthase (489 aa).

The chain crosses the membrane as a helical span at residues 6-26; that stretch reads SVLGLSSTLIIALAITVIFLL. Cys-432 lines the heme pocket.

This sequence belongs to the cytochrome P450 family. The cofactor is heme.

It is found in the membrane. The catalysed reaction is (-)-matairesinol + reduced [NADPH--hemoprotein reductase] + O2 = (-)-pluviatolide + oxidized [NADPH--hemoprotein reductase] + 2 H2O + H(+). The protein operates within aromatic compound metabolism; phenylpropanoid biosynthesis. Cytochrome P450 involved in the biosynthesis of etoposide, a chemotherapeutic compound of the topoisomerase inhibitor family. Catalyzes the conversion of matairesinol to pluviatolide. This chain is Pluviatolide synthase, found in Podophyllum peltatum (American mandrake).